The following is a 498-amino-acid chain: Glycerol kinase (498 aa).

T12 provides a ligand contact to ADP. Residues T12, T13, and S14 each coordinate ATP. T12 provides a ligand contact to sn-glycerol 3-phosphate. Residue R16 coordinates ADP. 3 residues coordinate sn-glycerol 3-phosphate: R82, E83, and Y134. Residues R82, E83, and Y134 each contribute to the glycerol site. At H230 the chain carries Phosphohistidine; by HPr. D244 lines the sn-glycerol 3-phosphate pocket. Glycerol is bound by residues D244 and Q245. The ADP site is built by T266 and G309. Residues T266, G309, Q313, and G410 each contribute to the ATP site. ADP-binding residues include G410 and N414.

It belongs to the FGGY kinase family. Homotetramer and homodimer (in equilibrium). Post-translationally, the phosphoenolpyruvate-dependent sugar phosphotransferase system (PTS), including enzyme I, and histidine-containing protein (HPr) are required for the phosphorylation, which leads to the activation of the enzyme.

The catalysed reaction is glycerol + ATP = sn-glycerol 3-phosphate + ADP + H(+). It participates in polyol metabolism; glycerol degradation via glycerol kinase pathway; sn-glycerol 3-phosphate from glycerol: step 1/1. Its activity is regulated as follows. Activated by phosphorylation and inhibited by fructose 1,6-bisphosphate (FBP). Its function is as follows. Key enzyme in the regulation of glycerol uptake and metabolism. Catalyzes the phosphorylation of glycerol to yield sn-glycerol 3-phosphate. The polypeptide is Glycerol kinase (Staphylococcus aureus (strain MRSA252)).